Here is a 93-residue protein sequence, read N- to C-terminus: Small ribosomal subunit protein uS19 (93 aa).

It belongs to the universal ribosomal protein uS19 family.

Protein S19 forms a complex with S13 that binds strongly to the 16S ribosomal RNA. This Kocuria rhizophila (strain ATCC 9341 / DSM 348 / NBRC 103217 / DC2201) protein is Small ribosomal subunit protein uS19.